The primary structure comprises 277 residues: Probable endonuclease LCL3 (277 aa).

The helical transmembrane segment at Trp39–Tyr56 threads the bilayer. The region spanning Arg77–Leu239 is the TNase-like domain. Arg126 is a catalytic residue. Asp131 provides a ligand contact to Ca(2+). Catalysis depends on residues Glu134 and Arg174.

Belongs to the LCL3 family.

It localises to the mitochondrion. The protein resides in the membrane. This chain is Probable endonuclease LCL3 (LCL3), found in Podospora anserina (strain S / ATCC MYA-4624 / DSM 980 / FGSC 10383) (Pleurage anserina).